The following is a 205-amino-acid chain: Glycerol-3-phosphate acyltransferase (205 aa).

5 consecutive transmembrane segments (helical) span residues S6 to V26, K55 to V75, V89 to V109, I120 to A140, and A162 to I182.

This sequence belongs to the PlsY family. Probably interacts with PlsX.

The protein localises to the cell inner membrane. It carries out the reaction an acyl phosphate + sn-glycerol 3-phosphate = a 1-acyl-sn-glycero-3-phosphate + phosphate. Its pathway is lipid metabolism; phospholipid metabolism. Its function is as follows. Catalyzes the transfer of an acyl group from acyl-phosphate (acyl-PO(4)) to glycerol-3-phosphate (G3P) to form lysophosphatidic acid (LPA). This enzyme utilizes acyl-phosphate as fatty acyl donor, but not acyl-CoA or acyl-ACP. The polypeptide is Glycerol-3-phosphate acyltransferase (Herminiimonas arsenicoxydans).